A 187-amino-acid polypeptide reads, in one-letter code: Hypoxanthine/guanine phosphoribosyltransferase (187 aa).

The protein belongs to the purine/pyrimidine phosphoribosyltransferase family. Archaeal HPRT subfamily. As to quaternary structure, homodimer.

It is found in the cytoplasm. The catalysed reaction is IMP + diphosphate = hypoxanthine + 5-phospho-alpha-D-ribose 1-diphosphate. It catalyses the reaction GMP + diphosphate = guanine + 5-phospho-alpha-D-ribose 1-diphosphate. It functions in the pathway purine metabolism; IMP biosynthesis via salvage pathway; IMP from hypoxanthine: step 1/1. Catalyzes a salvage reaction resulting in the formation of IMP that is energically less costly than de novo synthesis. In Ferroglobus placidus (strain DSM 10642 / AEDII12DO), this protein is Hypoxanthine/guanine phosphoribosyltransferase.